Consider the following 692-residue polypeptide: MAREFSLENTRNIGIMAHIDAGKTTATERILYYTGRIHKIGETHEGASQMDWMEQEQERGITITSAATTAQWKGHRVNIIDTPGHVDFTVEVERSLRVLDGAVAVLDAQSGVEPQTETVWRQATTYGVPRIVFVNKMDKIGADFLYSVGTIHDRLQANAHPIQLPIGAEDEFNGIIDLVEECAYMYGNDLGTDIQRVEIPEEHKELAEEYRGKLIEAVAELDEEMMMKYLEGEEITVEELKAGIRKATTSVEFFPVICGSAFKNKGVQILLDAVIDYLPSPLDVPAIKGTLPDTDEEVERKSSDEEPFSALAFKIMTDPYVGKLTFFRVYSGVLNSGSYVKNSTKGKRERVGRILQMHANSREEISTVYAGDIAAAVGLKDTTTGDTLCDEKSLVILESMEFPEPVISVAIEPKSKADQDKMGTALSKLSEEDPTFRAHTDQETGQTIIAGMGELHLDIIVDRMRREFKVEANVGAPQVAYRETFRSAAKVEGKFARQSGGRGQFGHVWIEFEPNEEGKGFEFENKIVGGVVPREYIPAVGAGLEDALKNGVLAGYPVVDIKAALVDGSYHDVDSSEMAFKIAASMALKAAVSKCNPVILEPMMKVEVVIPEEYMGDIMGDVTSRRGRVEGMEARGNAQVVRAMVPLSEMFGYATSLRSNTQGRGTFSMVFDHYEEVPKSVSEEIIKKNKGE.

The tr-type G domain occupies 8-282 (ENTRNIGIMA…AVIDYLPSPL (275 aa)). Residues 17-24 (AHIDAGKT), 81-85 (DTPGH), and 135-138 (NKMD) each bind GTP.

The protein belongs to the TRAFAC class translation factor GTPase superfamily. Classic translation factor GTPase family. EF-G/EF-2 subfamily.

Its subcellular location is the cytoplasm. Functionally, catalyzes the GTP-dependent ribosomal translocation step during translation elongation. During this step, the ribosome changes from the pre-translocational (PRE) to the post-translocational (POST) state as the newly formed A-site-bound peptidyl-tRNA and P-site-bound deacylated tRNA move to the P and E sites, respectively. Catalyzes the coordinated movement of the two tRNA molecules, the mRNA and conformational changes in the ribosome. This Bacillus cereus (strain Q1) protein is Elongation factor G.